The chain runs to 315 residues: Methionyl-tRNA formyltransferase (315 aa).

113 to 116 (SLLP) provides a ligand contact to (6S)-5,6,7,8-tetrahydrofolate.

The protein belongs to the Fmt family.

The enzyme catalyses L-methionyl-tRNA(fMet) + (6R)-10-formyltetrahydrofolate = N-formyl-L-methionyl-tRNA(fMet) + (6S)-5,6,7,8-tetrahydrofolate + H(+). In terms of biological role, attaches a formyl group to the free amino group of methionyl-tRNA(fMet). The formyl group appears to play a dual role in the initiator identity of N-formylmethionyl-tRNA by promoting its recognition by IF2 and preventing the misappropriation of this tRNA by the elongation apparatus. This Escherichia coli (strain SE11) protein is Methionyl-tRNA formyltransferase.